The chain runs to 632 residues: Phosphomethylpyrimidine synthase (632 aa).

Residues asparagine 237, methionine 266, tyrosine 295, histidine 331, 351–353, 392–395, and glutamate 431 each bind substrate; these read SRG and DGLR. Histidine 435 provides a ligand contact to Zn(2+). Tyrosine 458 provides a ligand contact to substrate. Zn(2+) is bound at residue histidine 499. [4Fe-4S] cluster is bound by residues cysteine 579, cysteine 582, and cysteine 587.

This sequence belongs to the ThiC family. As to quaternary structure, homodimer. [4Fe-4S] cluster is required as a cofactor.

It carries out the reaction 5-amino-1-(5-phospho-beta-D-ribosyl)imidazole + S-adenosyl-L-methionine = 4-amino-2-methyl-5-(phosphooxymethyl)pyrimidine + CO + 5'-deoxyadenosine + formate + L-methionine + 3 H(+). It functions in the pathway cofactor biosynthesis; thiamine diphosphate biosynthesis. In terms of biological role, catalyzes the synthesis of the hydroxymethylpyrimidine phosphate (HMP-P) moiety of thiamine from aminoimidazole ribotide (AIR) in a radical S-adenosyl-L-methionine (SAM)-dependent reaction. The polypeptide is Phosphomethylpyrimidine synthase (Chromobacterium violaceum (strain ATCC 12472 / DSM 30191 / JCM 1249 / CCUG 213 / NBRC 12614 / NCIMB 9131 / NCTC 9757 / MK)).